We begin with the raw amino-acid sequence, 197 residues long: Phospholipid hydroperoxide glutathione peroxidase (197 aa).

Residue S40 is modified to Phosphoserine. Residue U73 is part of the active site. Position 73 (U73) is a non-standard amino acid, selenocysteine.

Belongs to the glutathione peroxidase family. In terms of assembly, monomer. Has a tendency to form higher mass oligomers. Interacts with FUNDC1; this interaction promotes GPX4 recruitment into mitochondria through TOM/TIM complex where it is degraded by mitophagy.

The protein resides in the mitochondrion. Its subcellular location is the cytoplasm. The catalysed reaction is a hydroperoxy polyunsaturated fatty acid + 2 glutathione = a hydroxy polyunsaturated fatty acid + glutathione disulfide + H2O. It carries out the reaction 2 glutathione + H2O2 = glutathione disulfide + 2 H2O. The enzyme catalyses tert-butyl hydroperoxide + 2 glutathione = tert-butanol + glutathione disulfide + H2O. It catalyses the reaction cumene hydroperoxide + 2 glutathione = 2-phenylpropan-2-ol + glutathione disulfide + H2O. The catalysed reaction is (9S)-hydroperoxy-(10E,12Z)-octadecadienoate + 2 glutathione = (9S)-hydroxy-(10E,12Z)-octadecadienoate + glutathione disulfide + H2O. It carries out the reaction (13S)-hydroperoxy-(9Z,11E)-octadecadienoate + 2 glutathione = (13S)-hydroxy-(9Z,11E)-octadecadienoate + glutathione disulfide + H2O. The enzyme catalyses (5S)-hydroperoxy-(6E,8Z,11Z,14Z)-eicosatetraenoate + 2 glutathione = (5S)-hydroxy-(6E,8Z,11Z,14Z)-eicosatetraenoate + glutathione disulfide + H2O. It catalyses the reaction (12R)-hydroperoxy-(5Z,8Z,10E,14Z)-eicosatetraenoate + 2 glutathione = (12R)-hydroxy-(5Z,8Z,10E,14Z)-eicosatetraenoate + glutathione disulfide + H2O. The catalysed reaction is (12S)-hydroperoxy-(5Z,8Z,10E,14Z)-eicosatetraenoate + 2 glutathione = (12S)-hydroxy-(5Z,8Z,10E,14Z)-eicosatetraenoate + glutathione disulfide + H2O. It carries out the reaction (15S)-hydroperoxy-(5Z,8Z,11Z,13E)-eicosatetraenoate + 2 glutathione = (15S)-hydroxy-(5Z,8Z,11Z,13E)-eicosatetraenoate + glutathione disulfide + H2O. The enzyme catalyses (5S)-hydroperoxy-(6E,8Z,11Z,14Z,17Z)-eicosapentaenoate + 2 glutathione = (5S)-hydroxy-(6E,8Z,11Z,14Z,17Z)-eicosapentaenoate + glutathione disulfide + H2O. It catalyses the reaction (12S)-hydroperoxy-(5Z,8Z,10E,14Z,17Z)-eicosapentaenoate + 2 glutathione = (12S)-hydroxy-(5Z,8Z,10E,14Z,17Z)-eicosapentaenoate + glutathione disulfide + H2O. The catalysed reaction is (15S)-hydroperoxy-(5Z,8Z,11Z,13E,17Z)-eicosapentaenoate + 2 glutathione = (15S)-hydroxy-(5Z,8Z,11Z,13E,17Z)-eicosapentaenoate + glutathione disulfide + H2O. It carries out the reaction (15S)-hydroperoxy-(11Z,13E)-eicosadienoate + 2 glutathione = (15S)-hydroxy-(11Z,13E)-eicosadienoate + glutathione disulfide + H2O. The enzyme catalyses (17S)-hydroperoxy-(4Z,7Z,10Z,13Z,15E,19Z)-docosahexaenoate + 2 glutathione = (17S)-hydroxy-(4Z,7Z,10Z,13Z,15E,19Z)-docosahexaenoate + glutathione disulfide + H2O. It catalyses the reaction a hydroperoxy-1,2-diacyl-glycero-3-phosphocholine + 2 glutathione = a hydroxy-1,2-diacyl-glycero-3-phosphocholine + glutathione disulfide + H2O. Its function is as follows. Essential antioxidant peroxidase that directly reduces phospholipid hydroperoxide even if they are incorporated in membranes and lipoproteins. Can also reduce fatty acid hydroperoxide, cholesterol hydroperoxide and thymine hydroperoxide. Plays a key role in protecting cells from oxidative damage by preventing membrane lipid peroxidation. Required to prevent cells from ferroptosis, a non-apoptotic cell death resulting from an iron-dependent accumulation of lipid reactive oxygen species. The presence of selenocysteine (Sec) versus Cys at the active site is essential for life: it provides resistance to overoxidation and prevents cells against ferroptosis. The presence of Sec at the active site is also essential for the survival of a specific type of parvalbumin-positive interneurons, thereby preventing against fatal epileptic seizures. May be required to protect cells from the toxicity of ingested lipid hydroperoxides. Required for normal sperm development and male fertility. Essential for maturation and survival of photoreceptor cells. Plays a role in a primary T-cell response to viral and parasitic infection by protecting T-cells from ferroptosis and by supporting T-cell expansion. Plays a role of glutathione peroxidase in platelets in the arachidonic acid metabolism. Reduces hydroperoxy ester lipids formed by a 15-lipoxygenase that may play a role as down-regulator of the cellular 15-lipoxygenase pathway. Can also reduce small soluble hydroperoxides such as H2O2, cumene hydroperoxide and tert-butyl hydroperoxide. The polypeptide is Phospholipid hydroperoxide glutathione peroxidase (Pongo pygmaeus (Bornean orangutan)).